Consider the following 89-residue polypeptide: uncharacterized protein (89 aa).

The signal sequence occupies residues 1 to 19 (MIVRTLLIAAALLGGTAQA).

It is found in the secreted. This is an uncharacterized protein from Pseudomonas aeruginosa (strain UCBPP-PA14).